A 251-amino-acid polypeptide reads, in one-letter code: Pyridoxine 5'-phosphate synthase (251 aa).

2 residues coordinate 3-amino-2-oxopropyl phosphate: Asn-8 and Arg-19. His-44 acts as the Proton acceptor in catalysis. Positions 46 and 51 each coordinate 1-deoxy-D-xylulose 5-phosphate. Catalysis depends on Glu-76, which acts as the Proton acceptor. Thr-106 contributes to the 1-deoxy-D-xylulose 5-phosphate binding site. Residue His-200 is the Proton donor of the active site. Residues Asp-201 and 223–224 (GH) contribute to the 3-amino-2-oxopropyl phosphate site.

It belongs to the PNP synthase family. As to quaternary structure, homooctamer; tetramer of dimers.

Its subcellular location is the cytoplasm. It catalyses the reaction 3-amino-2-oxopropyl phosphate + 1-deoxy-D-xylulose 5-phosphate = pyridoxine 5'-phosphate + phosphate + 2 H2O + H(+). It participates in cofactor biosynthesis; pyridoxine 5'-phosphate biosynthesis; pyridoxine 5'-phosphate from D-erythrose 4-phosphate: step 5/5. In terms of biological role, catalyzes the complicated ring closure reaction between the two acyclic compounds 1-deoxy-D-xylulose-5-phosphate (DXP) and 3-amino-2-oxopropyl phosphate (1-amino-acetone-3-phosphate or AAP) to form pyridoxine 5'-phosphate (PNP) and inorganic phosphate. The sequence is that of Pyridoxine 5'-phosphate synthase from Agrobacterium fabrum (strain C58 / ATCC 33970) (Agrobacterium tumefaciens (strain C58)).